The primary structure comprises 285 residues: MSVDGVLNVLKPPGMTSHDVVDFIRKIYGIKKVGHTGTLDPDAAGVLPVCMGRATKFTSYLMEHDKRYRFEITFGFSTDTLDKSGKIVESGPVPLFTLEKLQEVLSQFKGEIQQIPPIYSAKKVKGKKLYEYARKGEEVEIPPIKVTVYELELIKYDAPHHLLLDVKCSKGTYVRALVRDICKKLEVPGHMSFLIRTEVGDFDIESSYTLEEIKEGKAEVQPVDKFIKFPSVELDEVSSNKILNGQFIRNTYNVENSLVKLYDNHGIFIGIGVAEGEKIRPKRLF.

The active-site Nucleophile is the Asp40.

The protein belongs to the pseudouridine synthase TruB family. Type 1 subfamily.

It carries out the reaction uridine(55) in tRNA = pseudouridine(55) in tRNA. Responsible for synthesis of pseudouridine from uracil-55 in the psi GC loop of transfer RNAs. The sequence is that of tRNA pseudouridine synthase B from Caldanaerobacter subterraneus subsp. tengcongensis (strain DSM 15242 / JCM 11007 / NBRC 100824 / MB4) (Thermoanaerobacter tengcongensis).